A 92-amino-acid chain; its full sequence is Ig kappa chain V region 3381 (92 aa).

Positions 1–23 (AFELTQTPASVEAAVGGTVTINC) are framework-1. Residues 24–34 (QASESISNWLA) form a complementarity-determining-1 region. Residues 35–49 (WYQQKPGQPXKLLIY) form a framework-2 region. The complementarity-determining-2 stretch occupies residues 50 to 56 (KASTLAS). Residues 57-88 (GVSSRFKGSGSGTQFTLTISDLECADAATYYC) are framework-3. Positions 89–92 (QSTD) are complementarity-determining-3.

This chain is Ig kappa chain V region 3381, found in Oryctolagus cuniculus (Rabbit).